The sequence spans 84 residues: Small ribosomal subunit protein eS27z (84 aa).

The segment at 39 to 61 (CQGCFNITTVFSHSQTVVMCGNC) adopts a C4-type zinc-finger fold.

The protein belongs to the eukaryotic ribosomal protein eS27 family. (Microbial infection) May interact with Tomato yellow leaf curl virus (TYLCV) and papaya leaf curl China virus (PaLcuCNV) C2 proteins. This interaction prevents activation of Jasmonate signaling, thereby facilitating viral uptake by insects vectors. Zn(2+) is required as a cofactor.

This Arabidopsis thaliana (Mouse-ear cress) protein is Small ribosomal subunit protein eS27z (RPS27A).